We begin with the raw amino-acid sequence, 342 residues long: tRNA N6-adenosine threonylcarbamoyltransferase (342 aa).

Fe cation contacts are provided by H111 and H115. Substrate contacts are provided by residues 134-138, D167, G180, D184, and N273; that span reads LVSGG. Fe cation is bound at residue D298.

The protein belongs to the KAE1 / TsaD family. It depends on Fe(2+) as a cofactor.

It is found in the cytoplasm. It catalyses the reaction L-threonylcarbamoyladenylate + adenosine(37) in tRNA = N(6)-L-threonylcarbamoyladenosine(37) in tRNA + AMP + H(+). Functionally, required for the formation of a threonylcarbamoyl group on adenosine at position 37 (t(6)A37) in tRNAs that read codons beginning with adenine. Is involved in the transfer of the threonylcarbamoyl moiety of threonylcarbamoyl-AMP (TC-AMP) to the N6 group of A37, together with TsaE and TsaB. TsaD likely plays a direct catalytic role in this reaction. The polypeptide is tRNA N6-adenosine threonylcarbamoyltransferase (Gloeobacter violaceus (strain ATCC 29082 / PCC 7421)).